Here is a 441-residue protein sequence, read N- to C-terminus: Tol-Pal system protein TolB (441 aa).

The first 25 residues, 1–25 (MRIFFFAYVLPTVISLLLGCQGAIA), serve as a signal peptide directing secretion.

The protein belongs to the TolB family. The Tol-Pal system is composed of five core proteins: the inner membrane proteins TolA, TolQ and TolR, the periplasmic protein TolB and the outer membrane protein Pal. They form a network linking the inner and outer membranes and the peptidoglycan layer.

The protein resides in the periplasm. In terms of biological role, part of the Tol-Pal system, which plays a role in outer membrane invagination during cell division and is important for maintaining outer membrane integrity. This is Tol-Pal system protein TolB from Anaplasma marginale (strain St. Maries).